Consider the following 447-residue polypeptide: MNAWEVNFDGLVGLTHHYAGLSFGNEASTRHRFQVSNPRLAAKQGLLKMKKLAGAGFPQAVIPPHERPFIPVLRQLGFSGSDEQVLEKVARQAPHWLSSVSSASPMWVANAATIAPSADTLDGKVHLTVANLNNKFHRSLEAPVTESLLKAIFNDEEKFSVHSALPQVALLGDEGAANHNRLGGHYGEPGMQIFVYGREEGNDTRPSRYPARQTREASEAVARLNQVNPQQVIFAQQNPDVIDQGVFHNDVIAVSNRQVLFCHQQAFARQSQLLANLRARVNGFMAIEVPATQVSVSDAVSTYLFNSQLLSRDDGSMVLVLPQECREHAGVWRYLNELLAADNPISELKVFDLRESMANGGGPACLRLRVVLTEEERRAVNPAVMMNDTLFNALNDWVDRYYRDRLTAADLADPQLLREGREALDTLTQLLDLGSVYPFQREGGGNG.

Substrate contacts are provided by residues 19–28, asparagine 110, and 137–138; these read AGLSFGNEAS and HR. Residue glutamate 174 is part of the active site. Arginine 212 contributes to the substrate binding site. The active site involves histidine 248. Positions 250 and 359 each coordinate substrate. The active-site Nucleophile is the cysteine 365.

Belongs to the succinylarginine dihydrolase family. In terms of assembly, homodimer.

The enzyme catalyses N(2)-succinyl-L-arginine + 2 H2O + 2 H(+) = N(2)-succinyl-L-ornithine + 2 NH4(+) + CO2. The protein operates within amino-acid degradation; L-arginine degradation via AST pathway; L-glutamate and succinate from L-arginine: step 2/5. Its function is as follows. Catalyzes the hydrolysis of N(2)-succinylarginine into N(2)-succinylornithine, ammonia and CO(2). In Escherichia coli O6:H1 (strain CFT073 / ATCC 700928 / UPEC), this protein is N-succinylarginine dihydrolase.